Here is a 325-residue protein sequence, read N- to C-terminus: ATP-dependent (S)-NAD(P)H-hydrate dehydratase (325 aa).

The region spanning 9 to 315 is the YjeF C-terminal domain; it reads LLKKVYNMVP…EHVHTAFLNV (307 aa). (6S)-NADPHX-binding positions include Gly-119 and 172–178; that span reads NVVEFGR. ATP-binding positions include 211-215 and 230-239; these read KGAKD and GGLKRSGGQG. A (6S)-NADPHX-binding site is contributed by Asp-240.

The protein belongs to the NnrD/CARKD family. Requires Mg(2+) as cofactor.

Its subcellular location is the cytoplasm. The enzyme catalyses (6S)-NADHX + ATP = ADP + phosphate + NADH + H(+). It carries out the reaction (6S)-NADPHX + ATP = ADP + phosphate + NADPH + H(+). Functionally, catalyzes the dehydration of the S-form of NAD(P)HX at the expense of ATP, which is converted to ADP. Together with NAD(P)HX epimerase, which catalyzes the epimerization of the S- and R-forms, the enzyme allows the repair of both epimers of NAD(P)HX, a damaged form of NAD(P)H that is a result of enzymatic or heat-dependent hydration. The chain is ATP-dependent (S)-NAD(P)H-hydrate dehydratase from Phaeosphaeria nodorum (strain SN15 / ATCC MYA-4574 / FGSC 10173) (Glume blotch fungus).